The primary structure comprises 315 residues: Lipoyl synthase (315 aa).

The segment at 1–33 (MADMPPVLRHPEKAHRPDQPQPKKPDWIRVKAP) is disordered. Residues 9-29 (RHPEKAHRPDQPQPKKPDWIR) are compositionally biased toward basic and acidic residues. 7 residues coordinate [4Fe-4S] cluster: Cys-54, Cys-59, Cys-65, Cys-80, Cys-84, Cys-87, and Ser-294. Residues 66-283 (WSQGHATMMI…EKAAYGKGFL (218 aa)) enclose the Radical SAM core domain.

Belongs to the radical SAM superfamily. Lipoyl synthase family. Requires [4Fe-4S] cluster as cofactor.

The protein localises to the cytoplasm. The enzyme catalyses [[Fe-S] cluster scaffold protein carrying a second [4Fe-4S](2+) cluster] + N(6)-octanoyl-L-lysyl-[protein] + 2 oxidized [2Fe-2S]-[ferredoxin] + 2 S-adenosyl-L-methionine + 4 H(+) = [[Fe-S] cluster scaffold protein] + N(6)-[(R)-dihydrolipoyl]-L-lysyl-[protein] + 4 Fe(3+) + 2 hydrogen sulfide + 2 5'-deoxyadenosine + 2 L-methionine + 2 reduced [2Fe-2S]-[ferredoxin]. The protein operates within protein modification; protein lipoylation via endogenous pathway; protein N(6)-(lipoyl)lysine from octanoyl-[acyl-carrier-protein]: step 2/2. In terms of biological role, catalyzes the radical-mediated insertion of two sulfur atoms into the C-6 and C-8 positions of the octanoyl moiety bound to the lipoyl domains of lipoate-dependent enzymes, thereby converting the octanoylated domains into lipoylated derivatives. This Paracoccus denitrificans (strain Pd 1222) protein is Lipoyl synthase.